Reading from the N-terminus, the 317-residue chain is Olfactory receptor 5AP2 (317 aa).

Over 1-32 the chain is Extracellular; the sequence is MVRSGKGIQNKNATEVTEFILLGLSDNPDLQG. Asn12 carries N-linked (GlcNAc...) asparagine glycosylation. The chain crosses the membrane as a helical span at residues 33–53; sequence VLFALFLIIYTMTLVGNLGMM. Residues 54–61 lie on the Cytoplasmic side of the membrane; the sequence is ALIKIDRS. The chain crosses the membrane as a helical span at residues 62–82; the sequence is LHTPMYFFLSSLSFVDASYSS. Residues 83-106 are Extracellular-facing; the sequence is SVTPKMLVNLMAEDKSISFNGCAT. Cys104 and Cys196 are joined by a disulfide. Residues 107–127 form a helical membrane-spanning segment; it reads QFFFFGSFLGTECFLLAMMAY. The Cytoplasmic portion of the chain corresponds to 128 to 140; that stretch reads DRYAAIWNPLLYP. A helical transmembrane segment spans residues 141 to 161; the sequence is VLMSGRICFMLVSTSFLAGFG. Topologically, residues 162 to 203 are extracellular; that stretch reads NAAIHTGMTFRLSFCGSNKINHFYCDTPPLLKLSCSDTHING. A helical membrane pass occupies residues 204-224; it reads IVIMAFSSFNVISCVLIVLIS. The Cytoplasmic segment spans residues 225–244; the sequence is YLCILIAILKMPSAEGRHKA. A helical membrane pass occupies residues 245–265; that stretch reads FSTCASHLMAVTIFFGTILFM. The Extracellular segment spans residues 266–278; that stretch reads YLRPTSSYSMEQD. Residues 279-299 form a helical membrane-spanning segment; it reads KVVSVFYTVVIPMLNPLIYSL. At 300 to 317 the chain is on the cytoplasmic side; that stretch reads KNKDVKKAVKKILHNYVV.

It belongs to the G-protein coupled receptor 1 family.

The protein resides in the cell membrane. Functionally, odorant receptor. This Mus musculus (Mouse) protein is Olfactory receptor 5AP2.